A 66-amino-acid polypeptide reads, in one-letter code: Alpha-conotoxin Vc1a (66 aa).

The first 25 residues, 1 to 25, serve as a signal peptide directing secretion; sequence MGMRMMFTVFLLVVLATTVVSSTSG. The propeptide occupies 26–47; that stretch reads RREFRGRNAAAKASDLVSLTDK. Cystine bridges form between C51-C57 and C52-C65. Residues 53–55 are ser-Xaa-Pro motif, crucial for potent interaction with nAChR; the sequence is SDP. Key region for inhibition of alpha-9-alpha-10/CHRNA9-CHRNA10 nAChR regions lie at residues 54–56 and 60–64; these read DPR and DHPEI. A 4-hydroxyproline modification is found at P55. E63 is subject to 4-carboxyglutamate. Position 65 is a cysteine amide (C65).

It belongs to the conotoxin A superfamily. In terms of processing, vc1.1 is described as having no post-translational modifications (except C-terminal amidation), whereas Vc1a contains a hydroxyproline at Pro-55 and a 4-carboxyglutamate at Glu-63 (and a C-terminal amidation). Hydroxylation of Pro-55 is not important for inhibition of alpha-9-alpha-10/CHRNA9-CHRNA10 nAChRs, since [P6O]Vc1.1 (Pro-55 hydroxylated) shows similar inhibition than native toxin (IC(50)=99.1 nM). In contrast, hydroxylation of Pro-55 seems to impair inhibition of HVA calcium channel currents, since [P6O]Vc1.1 has no effect on HVA calcium channel currents. In vivo, hydroxylation of Pro-55 seems to induce the loss of analgesic effects in rat models of neuropathic pain, since [P6O]Vc1.1 has no effect on mechanical allodynia. Post-translationally, gamma-carboxylation of Glu-63 is not important for inhibition of alpha-9-alpha-10/CHRNA9-CHRNA10 nAChRs, since [E14gamma]Vc1.1 (carboxyglutamate at Glu-63) shows similar inhibition than native toxin (IC(50)=65.3 nM). In contrast, gamma-carboxylation of Glu-63 seems to impair inhibition of HVA calcium channel currents, since [E14gamma]Vc1.1 has no effect on HVA calcium channel currents. In terms of processing, non-native isomers 'ribbon' (with disulfide connectivity C1-C4; C2-C3) and 'beads' (with disulfide connectivity C1-C2; C3-C4) of Vc1.1 also inhibit HVA calcium channel currents in rat DRG neurons (20-30% inhibition at 1 uM toxin). It has been shown that both reduced and alkylated Vc1.1 have no effect on HVA calcium channel currents. The observed activity can be attributed to specific isomers. [C3S]Vc1.1(1-8) mutant is C-terminally amidated. As to expression, expressed by the venom duct.

It is found in the secreted. Alpha-conotoxins act on postsynaptic membranes, they bind to the nicotinic acetylcholine receptors (nAChR) and thus inhibit them. This toxin (native toxin Vc1a; hydroxylated and gamma-carboxylated) blocks alpha-9-alpha-10/CHRNA9-CHRNA10 nAChRs (IC(50)=62.9 nM). In contrast to the non-post-translationally modified analog Vc1.1, Vc1a does not inhibit high voltage-activated (HVA) calcium channel currents. In vivo, in contrast to Vc1.1, Vc1a does not show analgesic effects in rat models of neuropathic pain. Functionally, the synthetic peptide Vc1.1 (a non-hydroxylated and non-gamma-carboxylated analog of Vc1a) has two types of targets. It blocks alpha-9-alpha-10/CHRNA9-CHRNA10 nAChRs (on rat receptors, IC(50)=19-109 nM) (with preference for rat over human receptors) and inhibits high voltage-activated (HVA) calcium channel (Cav2.2, Cav2.3) currents by acting on GABA(B) receptors (GABBR1 and GABBR2) (IC(50)=1.7 nM). It also shows moderate inhibition on alpha-6/alpha-3-beta-2-beta-3 (CHRNA6/CHRNA3-CHRNB2-CHRNB3) (IC(50)=140 nM) and alpha-6/alpha-3-beta-4 (CHRNA6/CHRNA3-CHRNB4) (IC(50)=980 nM). On alpha-9-alpha-10/CHRNA9-CHRNA10 nAChR, it most likely interacts with the alpha-10(+)/alpha-9(-)interface of the receptor. In vivo, it acts as a powerful analgesic in rat models of neuropathic pain. This Conus victoriae (Queen Victoria cone) protein is Alpha-conotoxin Vc1a.